A 217-amino-acid chain; its full sequence is Probable GTP-binding protein EngB (217 aa).

Residues 27 to 201 (EGIEVAFAGR…REKLDTWFSE (175 aa)) form the EngB-type G domain. GTP contacts are provided by residues 35-42 (GRSNAGKS), 62-66 (GRTQL), 80-83 (DLPG), 147-150 (TKAD), and 180-182 (FSS). The Mg(2+) site is built by Ser42 and Thr64.

Belongs to the TRAFAC class TrmE-Era-EngA-EngB-Septin-like GTPase superfamily. EngB GTPase family. Requires Mg(2+) as cofactor.

Its function is as follows. Necessary for normal cell division and for the maintenance of normal septation. This Yersinia enterocolitica serotype O:8 / biotype 1B (strain NCTC 13174 / 8081) protein is Probable GTP-binding protein EngB.